The following is a 48-amino-acid chain: Bacteriocin plantaricin-A (48 aa).

Residues 1–25 constitute a propeptide that is removed on maturation; it reads MKIQIKGMKQLSNKEMQKIVGGKSS.

As to quaternary structure, active plantaricin A is composed of an alpha chain and a beta chain.

This heat stable bacteriocin inhibits the growth of closely related Lactobacillus species. It may act as a pore-forming protein, creating a channel in the cell membrane through a 'barrel stave' mechanism. The protein is Bacteriocin plantaricin-A (plnA) of Lactiplantibacillus plantarum (strain ATCC BAA-793 / NCIMB 8826 / WCFS1) (Lactobacillus plantarum).